A 122-amino-acid chain; its full sequence is UPF0382 membrane protein SAUSA300_0565 (122 aa).

Helical transmembrane passes span 3-23, 46-66, 69-89, and 98-118; these read LFIILGALNAMMAVGTGAFGA, MYHGLALLIIGVISGTTSINV, AGWLIFAGIIFFSGSLYILVL, and ITPIGGVLFIIGWIMLIIATF.

It belongs to the UPF0382 family.

The protein resides in the cell membrane. This chain is UPF0382 membrane protein SAUSA300_0565, found in Staphylococcus aureus (strain USA300).